The chain runs to 49 residues: Large ribosomal subunit protein bL33B (49 aa).

Belongs to the bacterial ribosomal protein bL33 family.

The chain is Large ribosomal subunit protein bL33B from Lactobacillus helveticus (strain DPC 4571).